The primary structure comprises 950 residues: Voltage-gated inwardly rectifying potassium channel KCNH6 (950 aa).

Topologically, residues 1 to 261 are cytoplasmic; the sequence is MPVRRGHVAP…YSPFKAVWDW (261 aa). A PAS domain is found at 41 to 70; that stretch reads IIYCNDGFCELFGYSRVEVMQRPCTCDFLT. A PAC domain is found at 92-144; the sequence is CKVDILYYRKDASSFRCLVDVVPVKNEDGAVIMFILNFEDLAQLLAKSSSRSL. Residues 154-174 form a disordered region; that stretch reads LGSEGSHSRPSGQGPGPGRGK. A helical membrane pass occupies residues 262-282; sequence LILLLVIYTAVFTPYSAAFLL. At 283–298 the chain is on the extracellular side; the sequence is SDQDESQRGTCGYTCS. The chain crosses the membrane as a helical span at residues 299 to 319; sequence PLTVVDLIVDIMFVVDIVINF. Over 320 to 340 the chain is Cytoplasmic; the sequence is RTTYVNTNDEVVSHPRRIAVH. The helical transmembrane segment at 341–361 threads the bilayer; it reads YFKGWFLIDMVAAIPFDLLIF. Over 362-370 the chain is Extracellular; it reads RTGSDETTT. The chain crosses the membrane as a helical; Voltage-sensor span at residues 371–391; the sequence is LIGLLKTARLLRLVRVARKLD. Residues 392 to 398 are Cytoplasmic-facing; it reads RYSEYGA. A helical transmembrane segment spans residues 399 to 419; sequence AVLFLLMCTFALIAHWLACIW. The Extracellular portion of the chain corresponds to 420-463; the sequence is YAIGNVERPYLEPKIGWLDSLGAQLGKQYNGSDPASGPSVQDKY. The segment at residues 464-484 is an intramembrane region (pore-forming); that stretch reads VTALYFTFSSLTSVGFGNVSP. Residues 476 to 481 carry the Selectivity filter motif; it reads SVGFGN. At 485-490 the chain is on the extracellular side; that stretch reads NTNSEK. A helical transmembrane segment spans residues 491–511; it reads VFSICVMLIGSLMYASIFGNV. Topologically, residues 512-950 are cytoplasmic; the sequence is SAIIQRLYSG…HGSDPGFTRS (439 aa). The interval 594 to 694 is cNMP-binding domain; that stretch reads AFRGASKGCL…IHRADLLEVL (101 aa). Disordered regions lie at residues 719–750 and 890–950; these read GGLQSTPRQAPGHQDPQGFFLNDSQSGAAPSL and VPSS…FTRS. Polar residues predominate over residues 740 to 750; that stretch reads NDSQSGAAPSL. Low complexity predominate over residues 898-912; the sequence is PGGLLSPLASPLRPL.

It belongs to the potassium channel family. H (Eag) (TC 1.A.1.20) subfamily. Kv11.2/KCNH6 sub-subfamily. As to quaternary structure, the potassium channel is probably composed of a homo- or heterotetrameric complex of pore-forming alpha subunits that can associate only within their subfamily. Highly expressed in celiac and superior mesenteric ganglia, but not detected in brain or in heart. Detected at low levels in retina. Also found in pituitary. Also found in the olfactory bulb (granular and mitral cell layers).

The protein localises to the cell membrane. It catalyses the reaction K(+)(in) = K(+)(out). Functionally, pore-forming (alpha) subunit of voltage-gated inwardly rectifying potassium channel. Characterized by unusual gating kinetics by producing relatively small outward currents during membrane depolarization and large inward currents during subsequent repolarization which reflect a rapid inactivation during depolarization and quick recovery from inactivation but slow deactivation (closing) during repolarization. Activates even more slowly than KCNH2. This chain is Voltage-gated inwardly rectifying potassium channel KCNH6, found in Rattus norvegicus (Rat).